The chain runs to 725 residues: FYVE, RhoGEF and PH domain-containing protein 3 (725 aa).

The interval 1–151 (MESGRGSSTP…KADKDAGLAQ (151 aa)) is disordered. Over residues 124-136 (EEADSDVGEEPDS) the composition is skewed to acidic residues. At Ser-128 the chain carries Phosphoserine. One can recognise a DH domain in the interval 157-341 (KLLHIAQELL…STAANHSNAA (185 aa)). The PH 1 domain maps to 370–469 (ELIKEGQIQK…WIQIIQATIE (100 aa)). The tract at residues 487–532 (QDEDPSLSPDMPITSTSPVEPVVTTEGSSGAAGLEPRKLSSKTRRD) is disordered. Residues 500 to 512 (TSTSPVEPVVTTE) are compositionally biased toward low complexity. Residues 521–532 (EPRKLSSKTRRD) show a composition bias toward basic and acidic residues. The FYVE-type zinc finger occupies 532–588 (DKEKQSCKSCGETFNSITKRRHHCKLCGAVICGKCSEFKAENSRQSRVCRDCFLTQP). Residues Cys-538, Cys-541, Cys-555, Cys-558, Cys-563, Cys-566, Cys-580, and Cys-583 each coordinate Zn(2+). A PH 2 domain is found at 604 to 703 (PSLLCGPLRL…WLETLSTAAH (100 aa)). Residues 703–725 (HGDTAQDSPGALQLQVPMGAAAP) are disordered.

It is found in the cytoplasm. The protein localises to the cytoskeleton. In terms of biological role, promotes the formation of filopodia. May activate CDC42, a member of the Ras-like family of Rho- and Rac proteins, by exchanging bound GDP for free GTP. Plays a role in regulating the actin cytoskeleton and cell shape. This is FYVE, RhoGEF and PH domain-containing protein 3 (FGD3) from Homo sapiens (Human).